Reading from the N-terminus, the 97-residue chain is YcgL domain-containing protein PA14_47450 (97 aa).

A YcgL domain is found at 3–87 (RICSVYKSPR…GEEEYIEHLP (85 aa)).

The chain is YcgL domain-containing protein PA14_47450 from Pseudomonas aeruginosa (strain UCBPP-PA14).